The following is a 491-amino-acid chain: LETM1 domain-containing protein LETM2, mitochondrial (491 aa).

Residues 1 to 25 constitute a mitochondrion transit peptide; the sequence is MAFYSYNSVLAIARTRFPSHFVHPT. At 26–177 the chain is on the mitochondrial intermembrane side; that stretch reads CSSYSPSCAF…LLRTCVDFFR (152 aa). A compositionally biased stretch (polar residues) spans 94-109; it reads EQATKHPQVTSPQATK. The tract at residues 94-115 is disordered; the sequence is EQATKHPQVTSPQATKETGMEI. Residues 178 to 198 form a helical membrane-spanning segment; that stretch reads LVPFMVFLIVPFMEFLLPVFL. The Mitochondrial matrix portion of the chain corresponds to 199 to 491; that stretch reads KLFPEMLPST…QNSKASSKGA (293 aa). A coiled-coil region spans residues 208-235; sequence TFESESKKEEKQKKKMAVKLELAKFLQE. The region spanning 221 to 438 is the Letm1 RBD domain; that stretch reads KKMAVKLELA…LAPQLKGTKD (218 aa). The interval 435–491 is disordered; sequence GTKDEDFIQPPPVTSSPITPSTPISLPKGPITSSEEPTLQAKSQMTAQNSKASSKGA. Over residues 449 to 461 the composition is skewed to low complexity; sequence SSPITPSTPISLP. A compositionally biased stretch (polar residues) spans 465–491; it reads ITSSEEPTLQAKSQMTAQNSKASSKGA.

It localises to the mitochondrion inner membrane. The polypeptide is LETM1 domain-containing protein LETM2, mitochondrial (LETM2) (Homo sapiens (Human)).